Here is a 156-residue protein sequence, read N- to C-terminus: Transcriptional repressor NrdR (156 aa).

The segment at C3–C34 is a zinc-finger region. The ATP-cone domain occupies L49–V139.

This sequence belongs to the NrdR family. Zn(2+) serves as cofactor.

In terms of biological role, negatively regulates transcription of bacterial ribonucleotide reductase nrd genes and operons by binding to NrdR-boxes. This is Transcriptional repressor NrdR from Lysinibacillus sphaericus (strain C3-41).